Reading from the N-terminus, the 124-residue chain is Probable 5-hydroxyisourate hydrolase (124 aa).

Substrate contacts are provided by His-16, Arg-57, and Tyr-121.

Belongs to the transthyretin family. 5-hydroxyisourate hydrolase subfamily. As to quaternary structure, homotetramer.

The catalysed reaction is 5-hydroxyisourate + H2O = 5-hydroxy-2-oxo-4-ureido-2,5-dihydro-1H-imidazole-5-carboxylate + H(+). Functionally, catalyzes the hydrolysis of 5-hydroxyisourate (HIU) to 2-oxo-4-hydroxy-4-carboxy-5-ureidoimidazoline (OHCU). The protein is Probable 5-hydroxyisourate hydrolase of Schizosaccharomyces pombe (strain 972 / ATCC 24843) (Fission yeast).